The chain runs to 391 residues: Phosphoglycerate kinase (391 aa).

Residues 21-23, arginine 36, 59-62, arginine 113, and arginine 146 contribute to the substrate site; these read DLN and HLGR. ATP is bound by residues lysine 197, glutamate 319, and 345-348; that span reads GGDT.

The protein belongs to the phosphoglycerate kinase family. Monomer.

Its subcellular location is the cytoplasm. It carries out the reaction (2R)-3-phosphoglycerate + ATP = (2R)-3-phospho-glyceroyl phosphate + ADP. It functions in the pathway carbohydrate degradation; glycolysis; pyruvate from D-glyceraldehyde 3-phosphate: step 2/5. In Xylella fastidiosa (strain Temecula1 / ATCC 700964), this protein is Phosphoglycerate kinase.